A 101-amino-acid chain; its full sequence is Vacuolar ATPase assembly integral membrane protein VMA21 (101 aa).

Over 1–25 (MERPDKAALNALQPPEFRNESSLAS) the chain is Cytoplasmic. Residues 26–46 (TLKTLLFFTALMITVPIGLYF) traverse the membrane as a helical segment. The Lumenal portion of the chain corresponds to 47–65 (TTKSYIFEGALGMSNRDSY). A helical membrane pass occupies residues 66–86 (FYAAIVAVVAVHVVLALFVYV). Residues 87–101 (AWNEGSRQWREGKQD) lie on the Cytoplasmic side of the membrane.

It belongs to the VMA21 family. As to quaternary structure, associates with the V0 complex of the vacuolar ATPase (V-ATPase). Interacts with ATP6AP2.

It is found in the endoplasmic reticulum membrane. The protein resides in the endoplasmic reticulum-Golgi intermediate compartment membrane. It localises to the cytoplasmic vesicle. Its subcellular location is the COPII-coated vesicle membrane. Functionally, required for the assembly of the V0 complex of the vacuolar ATPase (V-ATPase) in the endoplasmic reticulum. This Homo sapiens (Human) protein is Vacuolar ATPase assembly integral membrane protein VMA21.